The chain runs to 364 residues: Cobalt-precorrin-5B C(1)-methyltransferase (364 aa).

Belongs to the CbiD family.

It catalyses the reaction Co-precorrin-5B + S-adenosyl-L-methionine = Co-precorrin-6A + S-adenosyl-L-homocysteine. It functions in the pathway cofactor biosynthesis; adenosylcobalamin biosynthesis; cob(II)yrinate a,c-diamide from sirohydrochlorin (anaerobic route): step 6/10. Its function is as follows. Catalyzes the methylation of C-1 in cobalt-precorrin-5B to form cobalt-precorrin-6A. This chain is Cobalt-precorrin-5B C(1)-methyltransferase, found in Pseudomonas putida (strain W619).